The primary structure comprises 213 residues: MKKQKTSGNQKPKVSYRINEQIRVPEVRVVFPEGGMQVMKTQDARRMAEERGIDLIEVQPNAQPPVCKLENYGKLIYKMDKKDKDLKKKQKTTSLKELRFHPNTDKHDFDFKTAHLEEFLRKGNRVRATIVFLGRSIIYKDKGFELADRLTERLSTVANRDGEPKFEGKKLFVYFEPDKKKIEQFEKQRAMAEKIASLPPLPPDNSGEPEDDE.

The interval 193–213 (EKIASLPPLPPDNSGEPEDDE) is disordered.

The protein belongs to the IF-3 family. In terms of assembly, monomer.

Its subcellular location is the cytoplasm. In terms of biological role, IF-3 binds to the 30S ribosomal subunit and shifts the equilibrium between 70S ribosomes and their 50S and 30S subunits in favor of the free subunits, thus enhancing the availability of 30S subunits on which protein synthesis initiation begins. This Chlorobaculum tepidum (strain ATCC 49652 / DSM 12025 / NBRC 103806 / TLS) (Chlorobium tepidum) protein is Translation initiation factor IF-3.